The primary structure comprises 983 residues: Receptor-type tyrosine-protein phosphatase-like N (983 aa).

A signal peptide spans 1-40; the sequence is MRRPRRPGGPAGCGGSEGSGGLRLLVCLLLLSGRPGGCSA. The interval 41–137 is RESP18 homology domain; that stretch reads ISAHGCLFDR…HPRDRSGSVP (97 aa). At 41–579 the chain is on the lumenal side; the sequence is ISAHGCLFDR…RQAHGISPMR (539 aa). Cys59 and Cys68 are oxidised to a cystine. The span at 118-133 shows a compositional bias: basic and acidic residues; that stretch reads RIPRLRPPEPHPRDRS. Disordered regions lie at residues 118-179, 293-330, and 399-420; these read RIPR…SPLS, RARA…SPPQ, and GDTA…ASST. The span at 148–158 shows a compositional bias: polar residues; that stretch reads SQGNPTGSSPA. Basic and acidic residues predominate over residues 307-326; the sequence is RAEDSSEGHEEEVLGGHGEK. A phosphoserine mark is found at Ser311 and Ser312. Positions 453–579 are sufficient for dimerization of proICA512; sequence SPLGQSQPTV…RQAHGISPMR (127 aa). 2 N-linked (GlcNAc...) asparagine glycosylation sites follow: Asn510 and Asn528. Residues 580–604 form a helical membrane-spanning segment; sequence SLLLTLVALAGVAGLLVALAVALCM. Positions 605-736 are sufficient for dimerization of proICA512; that stretch reads RHHSKQRDKE…PNTCATAQGE (132 aa). Residues 605-983 lie on the Cytoplasmic side of the membrane; it reads RHHSKQRDKE…VNAILKALPQ (379 aa). The interval 648–684 is disordered; it reads RAEGQPEPSRVSSVSSQFSDAAQASPSSHSSTPSWCE. Residues 652–681 are compositionally biased toward low complexity; sequence QPEPSRVSSVSSQFSDAAQASPSSHSSTPS. In terms of domain architecture, Tyrosine-protein phosphatase spans 713 to 973; the sequence is LAKEWQALCA…EFALTAVAEE (261 aa). Lys758 is covalently cross-linked (Glycyl lysine isopeptide (Lys-Gly) (interchain with G-Cter in SUMO)).

It belongs to the protein-tyrosine phosphatase family. Receptor class 8 subfamily. Homodimer; shown for the unprocessed protein (proICA512) in the endoplasmic reticulum and resolved during protein maturation as ICA512-TMF seems to be predominantly monomeric in secretory granules; however, ICA512-CCF interacts with ICA512-TMF disrupting the ICA512-TMF:SNTB2 complex. The isolated lumenal RESP18 homology domain has been shown to form disulfide-linked homooligomers. Interacts (via cytoplasmic domain) with phosphorylated SNTB2; this protects PTPRN against cleavage by CAPN1 to produce ICA512-CCF. Dephosphorylation of SNTB2 upon insulin stimulation disrupts the interaction and results in PTPRN cleavage. Interacts with SNX19. ICA512-CCF interacts with PIAS4; in the nucleus. Interacts with STAT5B (phosphorylated); down-regulated by ICA512-CCF sumoylation; ICA512-CCF prevents STAT5B dephosphorylation; ICA512-CCF mediates interaction of STAT5B with PIAS4. Interacts (via RESP18 homology domain) with insulin and proinsulin. Interacts with PTPRN2, PTPRA and PTPRE. Post-translationally, subject to proteolytic cleavage at multiple sites. Subject to cleavage on a pair of basic residues. Following exocytosis of secretory granules in pancreatic beta-cells ICA512-TMF located in the plasma-membrane is cleaved by mu-type calpain CPN1 to yield ICA512-CCF. In terms of processing, N-glycosylated. O-glycosylated. Post-translationally, sumoylated at two sites including Lys-758. Sumoylation decreases interaction with STAT5. As to expression, detected in pancreas islets. Detected in pancreas alpha, beta and delta cells, and in chromaffin cells in the adrenal medulla. Detected in amygdala, hypothalamus, autonomous nerve fibers and ganglia, especially at synaptic contacts. Detected in pituitary (at protein level). Detected in brain, specifically in cerebral cortex, diencephalon and brain stem.

It is found in the membrane. It localises to the cytoplasmic vesicle. The protein localises to the secretory vesicle membrane. The protein resides in the perikaryon. Its subcellular location is the cell projection. It is found in the axon. It localises to the synapse. The protein localises to the cell membrane. The protein resides in the endosome. Its subcellular location is the nucleus. Its function is as follows. Plays a role in vesicle-mediated secretory processes. Required for normal accumulation of secretory vesicles in hippocampus, pituitary and pancreatic islets. Required for the accumulation of normal levels of insulin-containing vesicles and preventing their degradation. Plays a role in insulin secretion in response to glucose stimuli. Required for normal accumulation of the neurotransmitters norepinephrine, dopamine and serotonin in the brain. In females, but not in males, required for normal accumulation and secretion of pituitary hormones, such as luteinizing hormone (LH) and follicle-stimulating hormone (FSH). Required to maintain normal levels of renin expression and renin release. Seems to lack intrinsic enzyme activity. Functionally, ICA512-TMF regulates dynamics and exocytosis of insulin secretory granules (SGs); binding of ICA512-TMF to SNTB2/beta-2-syntrophin is proposed to restrain SGs mobility and exocytosis by tethering them to the actin cytoskeleton depending on UTRN; the function is inhibited by cytoplasmic ICA512-CFF dimerizing with ICA512-TMF and displacing SNTB2. ICA512-CCF translocated to the nucleus promotes expression of insulin and other granule-related genes; the function implicates binding to and regulating activity of STAT5B probably by preventing its dephosphorylation and potentially by inducing its sumoylation by recruiting PIAS4. Enhances pancreatic beta-cell proliferation by converging with signaling by STAT5B and STAT3. ICA512-CCF located in the cytoplasm regulates dynamics and exocytosis of insulin secretory granules (SGs) by dimerizing with ICA512-TMF and displacing SNTB2 thus enhancing SGs mobility and exocytosis. The polypeptide is Receptor-type tyrosine-protein phosphatase-like N (Ptprn) (Rattus norvegicus (Rat)).